Consider the following 409-residue polypeptide: Gamma-glutamyl phosphate reductase (409 aa).

The protein belongs to the gamma-glutamyl phosphate reductase family.

Its subcellular location is the cytoplasm. It carries out the reaction L-glutamate 5-semialdehyde + phosphate + NADP(+) = L-glutamyl 5-phosphate + NADPH + H(+). It participates in amino-acid biosynthesis; L-proline biosynthesis; L-glutamate 5-semialdehyde from L-glutamate: step 2/2. Its function is as follows. Catalyzes the NADPH-dependent reduction of L-glutamate 5-phosphate into L-glutamate 5-semialdehyde and phosphate. The product spontaneously undergoes cyclization to form 1-pyrroline-5-carboxylate. This is Gamma-glutamyl phosphate reductase from Mycobacterium leprae (strain TN).